Consider the following 200-residue polypeptide: Recombination protein RecR (200 aa).

Residues 57-72 (CRQCRTLTEQELCPQC) form a C4-type zinc finger. A Toprim domain is found at 80–175 (TQLCVVEGPV…TATRIAHGVP (96 aa)).

The protein belongs to the RecR family.

May play a role in DNA repair. It seems to be involved in an RecBC-independent recombinational process of DNA repair. It may act with RecF and RecO. This chain is Recombination protein RecR, found in Pseudomonas entomophila (strain L48).